Reading from the N-terminus, the 80-residue chain is Small ribosomal subunit protein bS18 (80 aa).

It belongs to the bacterial ribosomal protein bS18 family. In terms of assembly, part of the 30S ribosomal subunit. Forms a tight heterodimer with protein bS6.

Binds as a heterodimer with protein bS6 to the central domain of the 16S rRNA, where it helps stabilize the platform of the 30S subunit. The polypeptide is Small ribosomal subunit protein bS18 (Clostridium perfringens (strain ATCC 13124 / DSM 756 / JCM 1290 / NCIMB 6125 / NCTC 8237 / Type A)).